The primary structure comprises 61 residues: Large ribosomal subunit protein bL33 (61 aa).

This sequence belongs to the bacterial ribosomal protein bL33 family.

In Amoebophilus asiaticus (strain 5a2), this protein is Large ribosomal subunit protein bL33.